The primary structure comprises 1119 residues: MSAPSLRARAAGLGLLLCAVLGRAGRSDSGGRGELGQPSGVAAERPCPTTCRCLGDLLDCSRKRLARLPEPLPSWVARLDLSHNRLSFIKASSMSHLQSLREVKLNNNELETIPNLGPVSANITLLSLAGNRIVEILPEHLKEFQSLETLDLSSNNISELQTAFPALQLKYLYLNSNRVTSMEPGYFDNLANTLLVLKLNRNRISAIPPKMFKLPQLQHLELNRNKIKNVDGLTFQGLGALKSLKMQRNGVTKLMDGAFWGLSNMEILQLDHNNLTEITKGWLYGLLMLQELHLSQNAINRISPDAWEFCQKLSELDLTFNHLSRLDDSSFLGLSLLNTLHIGNNRVSYIADCAFRGLSSLKTLDLKNNEISWTIEDMNGAFSGLDKLRRLILQGNRIRSITKKAFTGLDALEHLDLSDNAIMSLQGNAFSQMKKLQQLHLNTSSLLCDCQLKWLPQWVAENNFQSFVNASCAHPQLLKGRSIFAVSPDGFVCDDFPKPQITVQPETQSAIKGSNLSFICSAASSSDSPMTFAWKKDNELLHDAEMENYAHLRAQGGEVMEYTTILRLREVEFASEGKYQCVISNHFGSSYSVKAKLTVNMLPSFTKTPMDLTIRAGAMARLECAAVGHPAPQIAWQKDGGTDFPAARERRMHVMPEDDVFFIVDVKIEDIGVYSCTAQNSAGSISANATLTVLETPSFLRPLLDRTVTKGETAVLQCIAGGSPPPKLNWTKDDSPLVVTERHFFAAGNQLLIIVDSDVSDAGKYTCEMSNTLGTERGNVRLSVIPTPTCDSPQMTAPSLDDDGWATVGVVIIAVVCCVVGTSLVWVVIIYHTRRRNEDCSITNTDETNLPADIPSYLSSQGTLADRQDGYVSSESGSHHQFVTSSGAGFFLPQHDSSGTCHIDNSSEADVEAATDLFLCPFLGSTGPMYLKGNVYGSDPFETYHTGCSPDPRTVLMDHYEPSYIKKKECYPCSHPSEESCERSFSNISWPSHVRKLLNTSYSHNEGPGMKNLCLNKSSLDFSANPEPASVASSNSFMGTFGKALRRPHLDAYSSFGQPSDCQPRAFYLKAHSSPDLDSGSEEDGKERTDFQEENHICTFKQTLENYRTPNFQSYDLDT.

An N-terminal signal peptide occupies residues 1 to 24; sequence MSAPSLRARAAGLGLLLCAVLGRA. The LRRNT domain maps to 38 to 74; sequence PSGVAAERPCPTTCRCLGDLLDCSRKRLARLPEPLPS. LRR repeat units follow at residues 75-96, 99-120, 122-142, 146-167, 168-189, 193-214, 216-237, 240-261, 264-285, 288-309, 312-333, 336-357, 360-382, 387-408, and 411-432; these read WVAR…SMSH, SLRE…GPVS, NITL…EHLK, SLET…FPAL, QLKY…YFDN, TLLV…MFKL, QLQH…TFQG, ALKS…AFWG, NMEI…WLYG, MLQE…AWEF, KLSE…SFLG, LLNT…AFRG, SLKT…NGAF, KLRR…AFTG, and ALEH…AFSQ. 2 N-linked (GlcNAc...) asparagine glycosylation sites follow: Asn-122 and Asn-156. Asn-274 carries an N-linked (GlcNAc...) asparagine glycan. Asn-442, Asn-469, and Asn-515 each carry an N-linked (GlcNAc...) asparagine glycan. The LRRCT domain maps to 444 to 495; it reads SSLLCDCQLKWLPQWVAENNFQSFVNASCAHPQLLKGRSIFAVSPDGFVCDD. Ig-like C2-type domains are found at residues 499-598, 603-692, and 697-783; these read PQIT…AKLT, PSFT…ATLT, and PSFL…VRLS. 2 disulfides stabilise this stretch: Cys-520/Cys-581 and Cys-624/Cys-676. 2 N-linked (GlcNAc...) asparagine glycosylation sites follow: Asn-688 and Asn-729. Cysteines 718 and 767 form a disulfide. A helical membrane pass occupies residues 810–830; sequence VVIIAVVCCVVGTSLVWVVII. Asn-905, Asn-987, Asn-999, and Asn-1016 each carry an N-linked (GlcNAc...) asparagine glycan. Residues 1073–1093 form a disordered region; it reads SSPDLDSGSEEDGKERTDFQE. A compositionally biased stretch (basic and acidic residues) spans 1083-1093; it reads EDGKERTDFQE.

In terms of assembly, interacts with EGFR, ERBB2 and ERBB4 (in vitro). Widely expressed.

It localises to the cell membrane. The protein resides in the cytoplasmic vesicle membrane. Functionally, may play a role in craniofacial and inner ear morphogenesis during embryonic development. May act within the otic vesicle epithelium to control formation of the lateral semicircular canal in the inner ear, possibly by restricting the expression of NTN1. This Homo sapiens (Human) protein is Leucine-rich repeats and immunoglobulin-like domains protein 3 (LRIG3).